Consider the following 5098-residue polypeptide: Malformin synthetase mlfA (5098 aa).

Positions 225–616 (ERHAANRPHS…CGRADTQVKL (392 aa)) are adenylation 1. The Carrier 1 domain maps to 756–829 (SRLEQEIQLA…EAASLAKVQE (74 aa)). The residue at position 790 (S790) is an O-(pantetheine 4'-phosphoryl)serine. Positions 867–1298 (EDVFPCTTMQ…ALDSLTLLQA (432 aa)) are condensation 1. The adenylation 2 stretch occupies residues 1326 to 1715 (DGWVTRQPES…GRKDTQVKLR (390 aa)). The region spanning 1853 to 1930 (TAASELERTL…QLAAEFGEPA (78 aa)) is the Carrier 2 domain. Position 1890 is an O-(pantetheine 4'-phosphoryl)serine (S1890). 2 disordered regions span residues 1930–1960 (AGQS…DGVD) and 1993–2022 (GSSS…RVVS). Composition is skewed to low complexity over residues 1933-1957 (SASS…STND) and 1993-2011 (GSSS…SSSS). Residues 2063–2478 (EDIYPATALQ…ALSHSDRQTL (416 aa)) form a condensation 2 region. The adenylation 3 stretch occupies residues 2501 to 2893 (VRTPHAPAVC…IGRRDGQLKL (393 aa)). A Carrier 3 domain is found at 3029–3105 (RPVTAQEREM…QLMRHLSATR (77 aa)). S3066 carries the post-translational modification O-(pantetheine 4'-phosphoryl)serine. Condensation stretches follow at residues 3122–3587 (WVAL…TYDQ) and 3608–4027 (NIYP…EQLM). The tract at residues 4052-4442 (HASREAVCAW…VGRKDNQIKF (391 aa)) is adenylation 4. In terms of domain architecture, Carrier 4 spans 4576-4652 (MPSTAAERKM…DLAYRTTNLV (77 aa)). Position 4613 is an O-(pantetheine 4'-phosphoryl)serine (S4613). The tract at residues 4689-5016 (DVLPTTSFQR…LQTIVQHQNN (328 aa)) is condensation 5.

It belongs to the NRP synthetase family.

It functions in the pathway secondary metabolite biosynthesis. Its function is as follows. Nonribosomal peptide synthetase; part of the gene cluster that mediates the biosynthesis of malformins, cyclic pentapeptides with a disulfide bond between 2 consecutive cysteins, that show potential anti-tumor as well as antimalarial and antitrypanosomal properties. The nonribosomal peptide synthetase mlfA is responsible of the formation of the cyclic pentapeptide. The malformin biosynthesis clusters in malformin-producing fungi also contain enzymes involved in the formation of the disulfide bond between the two consecutive cysteins within malformins, in addition to additional tailoring enzymes such as methyltransferases or oxidoreductases. They are also composed of up to 4 major facilitator superfamily transporters, and transcription factors probably involved in the regulation of the expression of those clusters. This chain is Malformin synthetase mlfA, found in Aspergillus homomorphus (strain CBS 101889).